Consider the following 276-residue polypeptide: 5-deoxy-glucuronate isomerase (276 aa).

It belongs to the isomerase IolB family.

The catalysed reaction is 5-deoxy-D-glucuronate = 5-dehydro-2-deoxy-D-gluconate. The protein operates within polyol metabolism; myo-inositol degradation into acetyl-CoA; acetyl-CoA from myo-inositol: step 4/7. In terms of biological role, involved in the isomerization of 5-deoxy-glucuronate (5DG) to 5-dehydro-2-deoxy-D-gluconate (DKG or 2-deoxy-5-keto-D-gluconate). This is 5-deoxy-glucuronate isomerase from Geobacillus kaustophilus (strain HTA426).